Reading from the N-terminus, the 145-residue chain is Protein FimA (145 aa).

Belongs to the fimbrial protein family.

The protein resides in the fimbrium. This Bordetella pertussis protein is Protein FimA (fimA).